The primary structure comprises 515 residues: Maturase K (515 aa).

It belongs to the intron maturase 2 family. MatK subfamily.

The protein resides in the plastid. The protein localises to the chloroplast. In terms of biological role, usually encoded in the trnK tRNA gene intron. Probably assists in splicing its own and other chloroplast group II introns. The protein is Maturase K of Pinus pumila (Dwarf Siberian pine).